The following is a 646-amino-acid chain: bZIP transcription factor 39 (646 aa).

Topologically, residues 1–311 are cytoplasmic; that stretch reads MAEPALLDPT…KSKSKTKTKK (311 aa). Positions 25–172 are disordered; that stretch reads HELPLAGGGG…GGTVCEEEED (148 aa). Residues 43–53 are compositionally biased toward low complexity; that stretch reads LDGLEFDLPGD. Residues 59–69 show a composition bias toward basic and acidic residues; it reads FLLRSPERDDS. Low complexity predominate over residues 71 to 98; the sequence is EGSAAGSGPTASPSSSPTTSASNSAVAN. The span at 103-113 shows a compositional bias: basic and acidic residues; sequence EVKHEESDEGR. Positions 159–172 are enriched in acidic residues; sequence DSDEGGTVCEEEED. A bZIP domain is found at 172–232; the sequence is DERRAARLMR…AENATLRQQL (61 aa). A basic motif region spans residues 174 to 205; that stretch reads RRAARLMRNRESAQLSRQRKKRYVEELEEKVK. Residues 211-218 are leucine-zipper; it reads INDLNSRI. The disordered stretch occupies residues 272 to 308; the sequence is LVPIPRLKPQQPVPSSKVVKKPESKKTVENKSKSKTK. The segment covering 279-288 has biased composition (low complexity); that stretch reads KPQQPVPSSK. Positions 291-303 are enriched in basic and acidic residues; the sequence is KKPESKKTVENKS. A helical membrane pass occupies residues 312–332; it reads VASVSLLGLLLIMLVFGAFIP. Over 333-646 the chain is Lumenal; the sequence is GFNHNFGMCG…FKSSSPHLVN (314 aa). 6 N-linked (GlcNAc...) asparagine glycosylation sites follow: Asn371, Asn399, Asn525, Asn530, Asn565, and Asn571. The segment at 560–585 is disordered; that stretch reads TGKTANNTEPFNRTSESSSKLPDSKP. Positions 562 to 585 are enriched in polar residues; that stretch reads KTANNTEPFNRTSESSSKLPDSKP.

The protein belongs to the bZIP family. In terms of tissue distribution, highly expressed in leaf blade, and at lower levels in roots, leaf sheaths, flowers and seeds.

It is found in the endoplasmic reticulum membrane. The protein localises to the nucleus. Transcription factor involved in endoplasmic reticulum (ER) stress response. Acts as a ER stress sensor and activates the transcription factor BZIP50 and the chaperone BIP1. The protein is bZIP transcription factor 39 of Oryza sativa subsp. japonica (Rice).